Here is a 341-residue protein sequence, read N- to C-terminus: Paired box protein Pax-9 (341 aa).

Positions A4 to K130 form a DNA-binding region, paired. Residues E7–T63 form a PAI subdomain region. The segment at T82 to K130 is RED subdomain. The interval A168–P189 is interaction with KDM5B.

In terms of assembly, interacts with KDM5B.

It localises to the nucleus. In terms of biological role, transcription factor required for normal development of thymus, parathyroid glands, ultimobranchial bodies, teeth, skeletal elements of skull and larynx as well as distal limbs. The sequence is that of Paired box protein Pax-9 (PAX9) from Callithrix jacchus (White-tufted-ear marmoset).